A 227-amino-acid polypeptide reads, in one-letter code: Lipoprotein-releasing system ATP-binding protein LolD (227 aa).

The ABC transporter domain maps to 6–227 (LKCENINKFY…MQDGLLKEGA (222 aa)). Position 42-49 (42-49 (GSSGSGKS)) interacts with ATP.

This sequence belongs to the ABC transporter superfamily. Lipoprotein translocase (TC 3.A.1.125) family. As to quaternary structure, the complex is composed of two ATP-binding proteins (LolD) and two transmembrane proteins (LolC and LolE).

The protein resides in the cell inner membrane. Functionally, part of the ABC transporter complex LolCDE involved in the translocation of mature outer membrane-directed lipoproteins, from the inner membrane to the periplasmic chaperone, LolA. Responsible for the formation of the LolA-lipoprotein complex in an ATP-dependent manner. The polypeptide is Lipoprotein-releasing system ATP-binding protein LolD (Haemophilus influenzae (strain 86-028NP)).